The following is a 394-amino-acid chain: S-adenosylmethionine synthase (394 aa).

Residue His-16 participates in ATP binding. Asp-18 is a Mg(2+) binding site. Glu-44 lines the K(+) pocket. Residues Glu-57 and Gln-99 each coordinate L-methionine. Residues 99-109 (QSPDIAQGVDE) are flexible loop. ATP contacts are provided by residues 173–175 (DAK), 240–241 (RF), Asp-249, 255–256 (RK), Ala-272, and Lys-276. L-methionine is bound at residue Asp-249. Residue Lys-280 participates in L-methionine binding.

The protein belongs to the AdoMet synthase family. Homotetramer; dimer of dimers. It depends on Mg(2+) as a cofactor. K(+) is required as a cofactor.

It is found in the cytoplasm. The catalysed reaction is L-methionine + ATP + H2O = S-adenosyl-L-methionine + phosphate + diphosphate. Its pathway is amino-acid biosynthesis; S-adenosyl-L-methionine biosynthesis; S-adenosyl-L-methionine from L-methionine: step 1/1. In terms of biological role, catalyzes the formation of S-adenosylmethionine (AdoMet) from methionine and ATP. The overall synthetic reaction is composed of two sequential steps, AdoMet formation and the subsequent tripolyphosphate hydrolysis which occurs prior to release of AdoMet from the enzyme. In Lacticaseibacillus paracasei (strain ATCC 334 / BCRC 17002 / CCUG 31169 / CIP 107868 / KCTC 3260 / NRRL B-441) (Lactobacillus paracasei), this protein is S-adenosylmethionine synthase.